The sequence spans 711 residues: BCLAF1 and THRAP3 family member 3 (711 aa).

The segment covering 1-15 (MARSRSRSPRWKHRS) has biased composition (basic residues). Disordered regions lie at residues 1-42 (MARS…YRKD) and 48-67 (AWRM…PSRG). Ser15 and Ser17 each carry phosphoserine. A compositionally biased stretch (basic and acidic residues) spans 48 to 57 (AWRMDSEKHG). Residues Ser78, Ser80, and Ser187 each carry the phosphoserine modification. Disordered regions lie at residues 94–350 (KPHR…KDSI) and 371–404 (EKIK…PSPI). Basic and acidic residues-rich tracts occupy residues 163–197 (FRFE…DFET), 204–213 (RYPEDRDFRK), 220–242 (RPKD…KPEH), 296–311 (SDGR…DRKY), 318–349 (LNRE…KKDS), and 371–383 (EKIK…RKES). A Glycyl lysine isopeptide (Lys-Gly) (interchain with G-Cter in SUMO2) cross-link involves residue Lys400. 2 positions are modified to phosphoserine: Ser402 and Ser578.

This sequence belongs to the BCLAF1/THRAP3 family.

The protein resides in the mitochondrion. The sequence is that of BCLAF1 and THRAP3 family member 3 from Homo sapiens (Human).